The primary structure comprises 448 residues: MNKPNEITLSPHWEDRISNEQKLRRNDQRSVFQRDRARILHSAAFRRLQAKTQVHGPGSANDFYRTRLTHSLEVSQIGTGVVAQLKLRQPEFRALLTSTSLMESICLAHDIGHPPFGHGGEIALNYMMRDHGGFEGNGQTLRILSKLEPYTEHFGMNLARRTLLGVLKYPAFLDQVHSTERPQEVSNVRHLKSIDWHPPKGVYRDDADILNWILKPLSDVDKALFSTFRFQQESQHTHRKTRFKSIDCSIMELADDIAYGVHDLEDAIVMGIVTRNQWQESVASKLAECGDEWFEANIETISDKLFSGLQYQRKDGIGSIVNALLTSITIKPTTFNDEPEFESELLRWNAFLSPSMSYALEVLKKFVGQFVIHNSEMQRIEYKGQQIVMEIFDALNSDPERLLPENDKREWREAKESGANAHRVIADYIAGMTDGYAQRLYNQLFVPI.

Residues 67-260 (RLTHSLEVSQ…MELADDIAYG (194 aa)) form the HD domain.

The protein belongs to the dGTPase family. Type 2 subfamily.

The protein is Deoxyguanosinetriphosphate triphosphohydrolase-like protein of Aliivibrio fischeri (strain MJ11) (Vibrio fischeri).